A 215-amino-acid polypeptide reads, in one-letter code: Ribose-5-phosphate isomerase A (215 aa).

Substrate is bound by residues 26–29, 79–82, and 92–95; these read TGST, DGAD, and KGGG. The active-site Proton acceptor is the Glu101. Position 119 (Lys119) interacts with substrate.

Belongs to the ribose 5-phosphate isomerase family. As to quaternary structure, homodimer.

The enzyme catalyses aldehydo-D-ribose 5-phosphate = D-ribulose 5-phosphate. The protein operates within carbohydrate degradation; pentose phosphate pathway; D-ribose 5-phosphate from D-ribulose 5-phosphate (non-oxidative stage): step 1/1. Its function is as follows. Catalyzes the reversible conversion of ribose-5-phosphate to ribulose 5-phosphate. The sequence is that of Ribose-5-phosphate isomerase A from Stenotrophomonas maltophilia (strain K279a).